The following is a 309-amino-acid chain: Aspartate carbamoyltransferase catalytic subunit (309 aa).

Carbamoyl phosphate-binding residues include Arg57 and Thr58. Lys86 is a binding site for L-aspartate. 3 residues coordinate carbamoyl phosphate: Arg107, His135, and Gln138. The L-aspartate site is built by Arg168 and Arg228. Positions 267 and 268 each coordinate carbamoyl phosphate.

The protein belongs to the aspartate/ornithine carbamoyltransferase superfamily. ATCase family. As to quaternary structure, heterooligomer of catalytic and regulatory chains.

It catalyses the reaction carbamoyl phosphate + L-aspartate = N-carbamoyl-L-aspartate + phosphate + H(+). Its pathway is pyrimidine metabolism; UMP biosynthesis via de novo pathway; (S)-dihydroorotate from bicarbonate: step 2/3. Its function is as follows. Catalyzes the condensation of carbamoyl phosphate and aspartate to form carbamoyl aspartate and inorganic phosphate, the committed step in the de novo pyrimidine nucleotide biosynthesis pathway. This Nitrosopumilus maritimus (strain SCM1) protein is Aspartate carbamoyltransferase catalytic subunit.